An 82-amino-acid polypeptide reads, in one-letter code: Small ribosomal subunit protein bS18 (82 aa).

Positions 1–25 (MTEMNQTAIRRPFHRRRKTCPFSGT) are disordered.

The protein belongs to the bacterial ribosomal protein bS18 family. In terms of assembly, part of the 30S ribosomal subunit. Forms a tight heterodimer with protein bS6.

Its function is as follows. Binds as a heterodimer with protein bS6 to the central domain of the 16S rRNA, where it helps stabilize the platform of the 30S subunit. The sequence is that of Small ribosomal subunit protein bS18 from Bartonella henselae (strain ATCC 49882 / DSM 28221 / CCUG 30454 / Houston 1) (Rochalimaea henselae).